Reading from the N-terminus, the 151-residue chain is Flagellar assembly factor FliW (151 aa).

This sequence belongs to the FliW family. In terms of assembly, interacts with translational regulator CsrA and flagellin(s).

The protein resides in the cytoplasm. Acts as an anti-CsrA protein, binds CsrA and prevents it from repressing translation of its target genes, one of which is flagellin. Binds to flagellin and participates in the assembly of the flagellum. The polypeptide is Flagellar assembly factor FliW (Halalkalibacterium halodurans (strain ATCC BAA-125 / DSM 18197 / FERM 7344 / JCM 9153 / C-125) (Bacillus halodurans)).